Reading from the N-terminus, the 119-residue chain is Large ribosomal subunit protein uL18 (119 aa).

Belongs to the universal ribosomal protein uL18 family. Part of the 50S ribosomal subunit; part of the 5S rRNA/L5/L18/L25 subcomplex. Contacts the 5S and 23S rRNAs.

In terms of biological role, this is one of the proteins that bind and probably mediate the attachment of the 5S RNA into the large ribosomal subunit, where it forms part of the central protuberance. The protein is Large ribosomal subunit protein uL18 of Cupriavidus taiwanensis (strain DSM 17343 / BCRC 17206 / CCUG 44338 / CIP 107171 / LMG 19424 / R1) (Ralstonia taiwanensis (strain LMG 19424)).